Reading from the N-terminus, the 273-residue chain is Ribonuclease PH (273 aa).

Residues arginine 86 and 124–126 contribute to the phosphate site; that span reads GTR. Positions 254–273 are disordered; sequence GHQEPGEGAGVSLAPGGGGL.

Belongs to the RNase PH family. In terms of assembly, homohexameric ring arranged as a trimer of dimers.

The enzyme catalyses tRNA(n+1) + phosphate = tRNA(n) + a ribonucleoside 5'-diphosphate. Its function is as follows. Phosphorolytic 3'-5' exoribonuclease that plays an important role in tRNA 3'-end maturation. Removes nucleotide residues following the 3'-CCA terminus of tRNAs; can also add nucleotides to the ends of RNA molecules by using nucleoside diphosphates as substrates, but this may not be physiologically important. Probably plays a role in initiation of 16S rRNA degradation (leading to ribosome degradation) during starvation. This is Ribonuclease PH from Symbiobacterium thermophilum (strain DSM 24528 / JCM 14929 / IAM 14863 / T).